Here is a 273-residue protein sequence, read N- to C-terminus: Ribosomal RNA small subunit methyltransferase A (273 aa).

Asn-19, Leu-21, Gly-46, Glu-71, Asp-94, and Asn-117 together coordinate S-adenosyl-L-methionine.

It belongs to the class I-like SAM-binding methyltransferase superfamily. rRNA adenine N(6)-methyltransferase family. RsmA subfamily.

Its subcellular location is the cytoplasm. It catalyses the reaction adenosine(1518)/adenosine(1519) in 16S rRNA + 4 S-adenosyl-L-methionine = N(6)-dimethyladenosine(1518)/N(6)-dimethyladenosine(1519) in 16S rRNA + 4 S-adenosyl-L-homocysteine + 4 H(+). In terms of biological role, specifically dimethylates two adjacent adenosines (A1518 and A1519) in the loop of a conserved hairpin near the 3'-end of 16S rRNA in the 30S particle. May play a critical role in biogenesis of 30S subunits. This Burkholderia ambifaria (strain MC40-6) protein is Ribosomal RNA small subunit methyltransferase A.